The chain runs to 374 residues: Homoserine O-succinyltransferase (374 aa).

The region spanning 47-357 (NAILVCHALS…NFGHDSFLME (311 aa)) is the AB hydrolase-1 domain. Catalysis depends on serine 153, which acts as the Nucleophile. Substrate is bound at residue arginine 223. Catalysis depends on residues aspartate 318 and histidine 351. Substrate is bound at residue aspartate 352.

The protein belongs to the AB hydrolase superfamily. MetX family. As to quaternary structure, homodimer.

The protein resides in the cytoplasm. The catalysed reaction is L-homoserine + succinyl-CoA = O-succinyl-L-homoserine + CoA. The protein operates within amino-acid biosynthesis; L-methionine biosynthesis via de novo pathway; O-succinyl-L-homoserine from L-homoserine: step 1/1. Its function is as follows. Transfers a succinyl group from succinyl-CoA to L-homoserine, forming succinyl-L-homoserine. In Dechloromonas aromatica (strain RCB), this protein is Homoserine O-succinyltransferase.